Here is a 256-residue protein sequence, read N- to C-terminus: Imidazole glycerol phosphate synthase subunit HisF (256 aa).

Catalysis depends on residues aspartate 11 and aspartate 130.

Belongs to the HisA/HisF family. In terms of assembly, heterodimer of HisH and HisF.

The protein localises to the cytoplasm. It catalyses the reaction 5-[(5-phospho-1-deoxy-D-ribulos-1-ylimino)methylamino]-1-(5-phospho-beta-D-ribosyl)imidazole-4-carboxamide + L-glutamine = D-erythro-1-(imidazol-4-yl)glycerol 3-phosphate + 5-amino-1-(5-phospho-beta-D-ribosyl)imidazole-4-carboxamide + L-glutamate + H(+). The protein operates within amino-acid biosynthesis; L-histidine biosynthesis; L-histidine from 5-phospho-alpha-D-ribose 1-diphosphate: step 5/9. Functionally, IGPS catalyzes the conversion of PRFAR and glutamine to IGP, AICAR and glutamate. The HisF subunit catalyzes the cyclization activity that produces IGP and AICAR from PRFAR using the ammonia provided by the HisH subunit. This is Imidazole glycerol phosphate synthase subunit HisF from Prochlorococcus marinus (strain NATL2A).